Here is a 376-residue protein sequence, read N- to C-terminus: N-acetyldiaminopimelate deacetylase (376 aa).

Asp70 is an active-site residue. Glu129 serves as the catalytic Proton acceptor.

It belongs to the peptidase M20A family. N-acetyldiaminopimelate deacetylase subfamily.

The catalysed reaction is N-acetyl-(2S,6S)-2,6-diaminopimelate + H2O = (2S,6S)-2,6-diaminopimelate + acetate. The protein operates within amino-acid biosynthesis; L-lysine biosynthesis via DAP pathway; LL-2,6-diaminopimelate from (S)-tetrahydrodipicolinate (acetylase route): step 3/3. Its function is as follows. Catalyzes the conversion of N-acetyl-diaminopimelate to diaminopimelate and acetate. The sequence is that of N-acetyldiaminopimelate deacetylase from Bacillus pumilus (strain SAFR-032).